Here is a 218-residue protein sequence, read N- to C-terminus: Probable transaldolase (218 aa).

The active-site Schiff-base intermediate with substrate is the lysine 84.

The protein belongs to the transaldolase family. Type 3B subfamily.

Its subcellular location is the cytoplasm. The catalysed reaction is D-sedoheptulose 7-phosphate + D-glyceraldehyde 3-phosphate = D-erythrose 4-phosphate + beta-D-fructose 6-phosphate. Its pathway is carbohydrate degradation; pentose phosphate pathway; D-glyceraldehyde 3-phosphate and beta-D-fructose 6-phosphate from D-ribose 5-phosphate and D-xylulose 5-phosphate (non-oxidative stage): step 2/3. Its function is as follows. Transaldolase is important for the balance of metabolites in the pentose-phosphate pathway. The chain is Probable transaldolase from Sulfurihydrogenibium sp. (strain YO3AOP1).